The chain runs to 42 residues: Lebocin-like anionic peptide 1 (42 aa).

Hemolymph.

The protein localises to the secreted. Functionally, antimicrobial protein. Has antibacterial activity against the Gram-positive bacteria M.luteus (MIC=22.7 uM) and L.monocytogenes (MIC=90.9 uM). Lacks antibacterial activity against the Gram-positive bacteria B.circulans, S.aureus, and S.lutea, and the Gram-negative bacteria E.coli D31, E.coli ATCC 25922, and S.typhimurium. Has antifungal activity against A.niger (MIC=90.9 uM) and T.harzianum (MIC=90.9 uM), but lacks antifungal activity against S.cerevisiae, P.pastoris, Z.marxianus, C.albicans, C.fructus, and F.oxysporum. The sequence is that of Lebocin-like anionic peptide 1 from Galleria mellonella (Greater wax moth).